Here is a 375-residue protein sequence, read N- to C-terminus: Chaperone protein DnaJ (375 aa).

In terms of domain architecture, J spans 5–70; that stretch reads DYYEVLGVAR…NKRRAYDAHG (66 aa). A CR-type zinc finger spans residues 131 to 208; the sequence is GIERRIEIPT…CHGAGRVEED (78 aa). Zn(2+) contacts are provided by Cys144, Cys147, Cys160, Cys163, Cys182, Cys185, Cys196, and Cys199. 4 CXXCXGXG motif repeats span residues 144–151, 160–167, 182–189, and 196–203; these read CAPCHGSG, CGTCHGRG, CPHCDGRG, and CKTCHGAG.

It belongs to the DnaJ family. As to quaternary structure, homodimer. Requires Zn(2+) as cofactor.

Its subcellular location is the cytoplasm. In terms of biological role, participates actively in the response to hyperosmotic and heat shock by preventing the aggregation of stress-denatured proteins and by disaggregating proteins, also in an autonomous, DnaK-independent fashion. Unfolded proteins bind initially to DnaJ; upon interaction with the DnaJ-bound protein, DnaK hydrolyzes its bound ATP, resulting in the formation of a stable complex. GrpE releases ADP from DnaK; ATP binding to DnaK triggers the release of the substrate protein, thus completing the reaction cycle. Several rounds of ATP-dependent interactions between DnaJ, DnaK and GrpE are required for fully efficient folding. Also involved, together with DnaK and GrpE, in the DNA replication of plasmids through activation of initiation proteins. This Xanthomonas axonopodis pv. citri (strain 306) protein is Chaperone protein DnaJ.